A 510-amino-acid chain; its full sequence is 2,3-bisphosphoglycerate-independent phosphoglycerate mutase (510 aa).

Aspartate 11 and serine 61 together coordinate Mn(2+). The Phosphoserine intermediate role is filled by serine 61. Substrate is bound by residues histidine 124, 154–155 (RD), arginine 185, arginine 191, 260–263 (RPDR), and lysine 333. Residues aspartate 398, histidine 402, aspartate 439, histidine 440, and histidine 457 each contribute to the Mn(2+) site.

It belongs to the BPG-independent phosphoglycerate mutase family. In terms of assembly, monomer. Mn(2+) is required as a cofactor.

It catalyses the reaction (2R)-2-phosphoglycerate = (2R)-3-phosphoglycerate. It functions in the pathway carbohydrate degradation; glycolysis; pyruvate from D-glyceraldehyde 3-phosphate: step 3/5. Catalyzes the interconversion of 2-phosphoglycerate and 3-phosphoglycerate. The chain is 2,3-bisphosphoglycerate-independent phosphoglycerate mutase from Mycoplasma mobile (strain ATCC 43663 / 163K / NCTC 11711) (Mesomycoplasma mobile).